Consider the following 338-residue polypeptide: Ornithine carbamoyltransferase (338 aa).

Carbamoyl phosphate contacts are provided by residues 56–59 (STRT), Arg107, and 134–137 (HPTQ). Residues Asn168, Asp232, and 236–237 (SM) contribute to the L-ornithine site. Carbamoyl phosphate-binding positions include 274 to 275 (CL) and Arg320.

It belongs to the aspartate/ornithine carbamoyltransferase superfamily. OTCase family.

The protein resides in the cytoplasm. It carries out the reaction carbamoyl phosphate + L-ornithine = L-citrulline + phosphate + H(+). It participates in amino-acid biosynthesis; L-arginine biosynthesis; L-arginine from L-ornithine and carbamoyl phosphate: step 1/3. Functionally, reversibly catalyzes the transfer of the carbamoyl group from carbamoyl phosphate (CP) to the N(epsilon) atom of ornithine (ORN) to produce L-citrulline. The polypeptide is Ornithine carbamoyltransferase (argI) (Buchnera aphidicola subsp. Schizaphis graminum (strain Sg)).